A 596-amino-acid polypeptide reads, in one-letter code: Dihydroxy-acid dehydratase pbrD, mitochondrial (596 aa).

Residues methionine 1–arginine 18 constitute a mitochondrion transit peptide. Cysteine 84 is a binding site for [2Fe-2S] cluster. Residue aspartate 116 coordinates Mg(2+). Cysteine 157 lines the [2Fe-2S] cluster pocket. Aspartate 158 contacts Mg(2+). Residue cysteine 230 participates in [2Fe-2S] cluster binding. A Mg(2+)-binding site is contributed by glutamate 483. Catalysis depends on serine 509, which acts as the Proton acceptor.

Belongs to the IlvD/Edd family. The cofactor is [2Fe-2S] cluster. Requires Mg(2+) as cofactor.

The protein resides in the mitochondrion. The enzyme catalyses (2R)-2,3-dihydroxy-3-methylbutanoate = 3-methyl-2-oxobutanoate + H2O. It catalyses the reaction (2R,3R)-2,3-dihydroxy-3-methylpentanoate = (S)-3-methyl-2-oxopentanoate + H2O. Its pathway is amino-acid biosynthesis; L-isoleucine biosynthesis; L-isoleucine from 2-oxobutanoate: step 3/4. The protein operates within amino-acid biosynthesis; L-valine biosynthesis; L-valine from pyruvate: step 3/4. Its activity is regulated as follows. DHAD activity is not inhibited by the dihydroxyacid dehydratase inhibitor aspterric acid (AA). Its function is as follows. Dihydroxyacid dehydratase; part of the gene cluster that mediates the biosynthesis of the sesquiterpenoid aspterric acid (AA), an inhibitor of dihydroxy-acid dehydratase (DHAD) effective as an herbicide. Performs the third step in the common pathway leading to biosynthesis of branched-chain amino acids. Catalyzes the dehydration of (2R,3R)-2,3-dihydroxy-3-methylpentanoate (2,3-dihydroxy-3-methylvalerate) into 2-oxo-3-methylpentanoate (2-oxo-3-methylvalerate) and of (2R)-2,3-dihydroxy-3-methylbutanoate (2,3-dihydroxyisovalerate) into 2-oxo-3-methylbutanoate (2-oxoisovalerate), the penultimate precursor to L-isoleucine and L-valine, respectively. PbrD confers self-resistance in the presence of the dihydroxyacid dehydratase inhibitor aspterric acid (AA) produced by the ast cluster. The polypeptide is Dihydroxy-acid dehydratase pbrD, mitochondrial (Penicillium brasilianum).